The following is a 36-amino-acid chain: Photosystem I reaction center subunit VIII (36 aa).

The chain crosses the membrane as a helical span at residues 10 to 30; sequence FVPLVGLVFSAIIMVLSFLYI.

It belongs to the PsaI family.

It is found in the plastid. The protein resides in the chloroplast thylakoid membrane. In terms of biological role, may help in the organization of the PsaL subunit. The protein is Photosystem I reaction center subunit VIII of Welwitschia mirabilis (Tree tumbo).